Consider the following 508-residue polypeptide: Aldehyde dehydrogenase family 7 member A1 (508 aa).

244–249 (GSSKVG) contacts NAD(+). Glutamate 266 functions as the Proton acceptor in the catalytic mechanism. Catalysis depends on cysteine 300, which acts as the Nucleophile.

Belongs to the aldehyde dehydrogenase family. Homotetramer.

The catalysed reaction is an aldehyde + NAD(+) + H2O = a carboxylate + NADH + 2 H(+). Functionally, may play a role in fruit development. This Malus domestica (Apple) protein is Aldehyde dehydrogenase family 7 member A1.